The sequence spans 805 residues: Transducer protein BasT (805 aa).

2 helical membrane-spanning segments follow: residues 25-45 and 296-316; these read FNVL…YIHL and NLAG…LTVG. 2 HAMP domains span residues 317–370 and 437–490; these read RRTS…TAAS and ERLE…ATLA. The Methyl-accepting transducer domain maps to 509–745; that stretch reads SAAEIRSASD…EVVTMIDEVT (237 aa). Residues 513-532 form a disordered region; the sequence is IRSASDQVSESVQDISADAD. The segment covering 516 to 526 has biased composition (polar residues); sequence ASDQVSESVQD. Glutamate methyl ester (Glu) occurs at positions 554, 736, and 763. The disordered stretch occupies residues 752–779; that stretch reads ATESQQVSAAAEEQAASVSEVAGRADDL. Positions 754–773 are enriched in low complexity; that stretch reads ESQQVSAAAEEQAASVSEVA.

Belongs to the methyl-accepting chemotaxis (MCP) protein family. As to quaternary structure, interacts with CheA, CheY, CheW1 and CheW2. In terms of processing, methylated by CheR.

It is found in the cell membrane. Its function is as follows. Mediates chemotaxis towards five attractant amino acids (leucine, isoleucine, valine, methionine and cysteine). Probably transduces the signal from the substrate-binding protein BasB to the histidine kinase CheA. This Halobacterium salinarum (strain ATCC 29341 / DSM 671 / R1) protein is Transducer protein BasT (basT).